The primary structure comprises 223 residues: Probable Brix domain-containing ribosomal biogenesis protein (223 aa).

Positions 1 to 196 constitute a Brix domain; it reads MMLITTSHRP…IWIMEDGRRW (196 aa).

Functionally, probably involved in the biogenesis of the ribosome. This Pyrococcus furiosus (strain ATCC 43587 / DSM 3638 / JCM 8422 / Vc1) protein is Probable Brix domain-containing ribosomal biogenesis protein.